The chain runs to 38 residues: Large ribosomal subunit protein bL36 (38 aa).

This sequence belongs to the bacterial ribosomal protein bL36 family.

This chain is Large ribosomal subunit protein bL36, found in Enterococcus faecalis (strain ATCC 700802 / V583).